The primary structure comprises 203 residues: uncharacterized protein (203 aa).

This is an uncharacterized protein from Archaeoglobus fulgidus (strain ATCC 49558 / DSM 4304 / JCM 9628 / NBRC 100126 / VC-16).